A 710-amino-acid chain; its full sequence is U3 small nucleolar RNA-associated protein 4 (710 aa).

9 WD repeats span residues 11-59 (YTPS…CLKT), 64-105 (GVDR…PLVN), 108-147 (SNAGAIWSIAICDETKTLAVGCDDGSCVLFDISGGPGVIE), 154-192 (RQTSRILSLDFQTKDHLVGGCADGVIKVWDLSTPNSAII), 199-241 (RARK…LSQS), 290-327 (FHSHDVRCMAVFECKSLDVLISGGMDMMLAVIPVRQFN), 328-365 (RKNHRMISAVPQRPRMAVAPKARLFMLWNDHEVLLWRI), 488-527 (SMCDGICSIAVSSDGDYFAVADTVGNIFCYSLSNLTYSEL), and 529-569 (RVNT…LSEW).

In terms of assembly, component of the ribosomal small subunit (SSU) processome.

The protein localises to the nucleus. It is found in the nucleolus. Functionally, involved in nucleolar processing of pre-18S ribosomal RNA. Required for optimal pre-ribosomal RNA transcription by RNA polymerase I together with a subset of U3 proteins required for transcription (t-UTPs). The chain is U3 small nucleolar RNA-associated protein 4 (utp4) from Schizosaccharomyces pombe (strain 972 / ATCC 24843) (Fission yeast).